The following is a 230-amino-acid chain: Thioredoxin domain-containing protein PLP3B (230 aa).

The region spanning 89 to 173 (VSEGDFLGEV…GIAMDRLVGF (85 aa)) is the Thioredoxin domain. The segment at 199-230 (EKRKEEDEEDYEYQESIRRSVRSSANVDSDSD) is disordered. Polar residues predominate over residues 220 to 230 (RSSANVDSDSD).

Belongs to the phosducin family. As to quaternary structure, interacts with TUBB2, TUBB3, TUBB4 and TUBB5. In terms of tissue distribution, expressed in roots, cotyledons, leaves, stems and flowers.

Its subcellular location is the cytoplasm. It is found in the nucleus. Functionally, tubulin-binding protein involved in microtubule formation. This Arabidopsis thaliana (Mouse-ear cress) protein is Thioredoxin domain-containing protein PLP3B (PLP3B).